The primary structure comprises 281 residues: Pantothenate synthetase (281 aa).

Residue 30–37 coordinates ATP; that stretch reads MGYLHEGH. His-37 serves as the catalytic Proton donor. Gln-61 contacts (R)-pantoate. Residue Gln-61 participates in beta-alanine binding. 147–150 is an ATP binding site; the sequence is GEKD. Gln-153 serves as a coordination point for (R)-pantoate. Residues Ile-176 and 184 to 187 contribute to the ATP site; that span reads KSSR.

Belongs to the pantothenate synthetase family. As to quaternary structure, homodimer.

It is found in the cytoplasm. The catalysed reaction is (R)-pantoate + beta-alanine + ATP = (R)-pantothenate + AMP + diphosphate + H(+). The protein operates within cofactor biosynthesis; (R)-pantothenate biosynthesis; (R)-pantothenate from (R)-pantoate and beta-alanine: step 1/1. In terms of biological role, catalyzes the condensation of pantoate with beta-alanine in an ATP-dependent reaction via a pantoyl-adenylate intermediate. This is Pantothenate synthetase from Clostridium botulinum (strain 657 / Type Ba4).